Reading from the N-terminus, the 752-residue chain is Granule-bound starch synthase 2, chloroplastic/amyloplastic (752 aa).

Residues 1–57 (MMLSLGSDATVLPFHAKNLKFTPKLSTLNGDLAFSKGLGVGRLNCGSVRLNHKQHVR) constitute a chloroplast transit peptide. 2 disordered regions span residues 116-146 (LEGNGVSYESSEKSLSRDSNPQKGSSSSGSA) and 224-253 (FENFEGANEPSSKEVANEAENFESGGEKPP). Lysine 275 is an ADP-alpha-D-glucose binding site.

The protein belongs to the glycosyltransferase 1 family. Bacterial/plant glycogen synthase subfamily. In terms of tissue distribution, widely expressed.

It localises to the plastid. Its subcellular location is the chloroplast. The protein resides in the amyloplast. The catalysed reaction is [(1-&gt;4)-alpha-D-glucosyl](n) + ADP-alpha-D-glucose = [(1-&gt;4)-alpha-D-glucosyl](n+1) + ADP + H(+). Its pathway is glycan biosynthesis; starch biosynthesis. This Pisum sativum (Garden pea) protein is Granule-bound starch synthase 2, chloroplastic/amyloplastic.